Here is a 682-residue protein sequence, read N- to C-terminus: Potassium-transporting ATPase ATP-binding subunit (682 aa).

A run of 4 helical transmembrane segments spans residues 34–54 (PVMF…IAMA), 62–82 (ALFS…ANFA), 219–239 (IALT…TATL), and 254–274 (VLVA…LSAI). The 4-aspartylphosphate intermediate role is filled by Asp307. Residues Asp344, Glu348, 377-384 (FTAQSRMS), and Lys395 each bind ATP. 2 residues coordinate Mg(2+): Asp518 and Asp522. 3 helical membrane-spanning segments follow: residues 588–608 (FAII…LNIM), 616–636 (AILS…PLAL), and 656–676 (IYGL…DLLL).

It belongs to the cation transport ATPase (P-type) (TC 3.A.3) family. Type IA subfamily. The system is composed of three essential subunits: KdpA, KdpB and KdpC.

The protein resides in the cell inner membrane. It catalyses the reaction K(+)(out) + ATP + H2O = K(+)(in) + ADP + phosphate + H(+). Functionally, part of the high-affinity ATP-driven potassium transport (or Kdp) system, which catalyzes the hydrolysis of ATP coupled with the electrogenic transport of potassium into the cytoplasm. This subunit is responsible for energy coupling to the transport system and for the release of the potassium ions to the cytoplasm. The sequence is that of Potassium-transporting ATPase ATP-binding subunit from Escherichia coli (strain UTI89 / UPEC).